The chain runs to 352 residues: MSGNTFGALFTVTTFGESHGPAIGCVVDGCPPGMSLTEADIQPFLDKRKPGQSKYTTQRREEDKVQILSGVFDGKTTGAPIALLIQNTDQRSRDYEDIKNLFRPGHADFTYHYKYGHRDYRGGGRSSARETAARVAAGAIARLYLKRYLNLDIIGYLQQMGDLKLQFENENEINKNPFFCPNNKQTQELADYIDRLRRQGDSVGARVKILARGVPTGLGDPVFDKLDATLAYAMMSINAVKGVEIGAGFNAVEQLGSYHRDQMTAKGFLSNHAGGILGGIATGQPIEVSIALKPTSSITTPGQTINTEGEEVTVVTKGRHDPCVGIRAVPIAEAMMALVLMDHYLRHKAQCK.

Residue Arg48 coordinates NADP(+). FMN is bound by residues 125-127, 238-239, Gly278, 293-297, and Arg319; these read RSS, NA, and KPTSS.

The protein belongs to the chorismate synthase family. Homotetramer. Requires FMNH2 as cofactor.

The catalysed reaction is 5-O-(1-carboxyvinyl)-3-phosphoshikimate = chorismate + phosphate. It functions in the pathway metabolic intermediate biosynthesis; chorismate biosynthesis; chorismate from D-erythrose 4-phosphate and phosphoenolpyruvate: step 7/7. Functionally, catalyzes the anti-1,4-elimination of the C-3 phosphate and the C-6 proR hydrogen from 5-enolpyruvylshikimate-3-phosphate (EPSP) to yield chorismate, which is the branch point compound that serves as the starting substrate for the three terminal pathways of aromatic amino acid biosynthesis. This reaction introduces a second double bond into the aromatic ring system. The chain is Chorismate synthase from Legionella pneumophila (strain Paris).